Reading from the N-terminus, the 176-residue chain is MARIGKKPIQVPDKVKVSYTDRCITVSSDKGVLSRTVQGDVDLEIKEDHIHVVAGSENRKVLALQGLYRSLVNNMVQGVSTGFSRSLEINGIGYRVELNGQTVVLNIGYSHPINFELPDGVTAKVEKNVLTLASIDKELLGQTAASIRKLRPPEPYKGRGIKYTDEHIQRKAGKTK.

A compositionally biased stretch (basic and acidic residues) spans 151–169; that stretch reads RPPEPYKGRGIKYTDEHIQ. The disordered stretch occupies residues 151–176; it reads RPPEPYKGRGIKYTDEHIQRKAGKTK.

The protein belongs to the universal ribosomal protein uL6 family. As to quaternary structure, part of the 50S ribosomal subunit.

This protein binds to the 23S rRNA, and is important in its secondary structure. It is located near the subunit interface in the base of the L7/L12 stalk, and near the tRNA binding site of the peptidyltransferase center. The polypeptide is Large ribosomal subunit protein uL6 (Desulfosudis oleivorans (strain DSM 6200 / JCM 39069 / Hxd3) (Desulfococcus oleovorans)).